The following is a 332-amino-acid chain: DGAT1/2-independent enzyme synthesizing storage lipids (332 aa).

Topologically, residues 1–10 are lumenal; that stretch reads MIGSNESSTE. N5 carries N-linked (GlcNAc...) asparagine glycosylation. The chain crosses the membrane as a helical span at residues 11–31; the sequence is GPIPTSYLSFLAYLLGEWTGV. Topologically, residues 32–45 are cytoplasmic; it reads EHTEDYLSYGAYLS. The helical transmembrane segment at 46-66 threads the bilayer; sequence WVLFPLAIVFILPVAIFFFCF. Over 67-332 the chain is Lumenal; that stretch reads NTSLLLLHIY…ERFQTRQKED (266 aa). H132 is a catalytic residue. N-linked (GlcNAc...) asparagine glycosylation occurs at N289.

This sequence belongs to the diacylglycerol acyltransferase family. Highly divergent.

The protein localises to the endoplasmic reticulum membrane. It carries out the reaction a 1,2-diacylglycerol + a 1,2-diacyl-sn-glycero-3-phosphocholine = a triacylglycerol + a 1-acyl-sn-glycero-3-phosphocholine. The catalysed reaction is a 1-O-alkyl-2-acyl-sn-glycero-3-phosphocholine + a 1,2-diacylglycerol = a 1-O-alkyl-sn-glycero-3-phosphocholine + a triacylglycerol. The enzyme catalyses a 2-acylglycerol + an acyl-CoA = a 1,2-diacylglycerol + CoA. It catalyses the reaction an acyl-CoA + a 1,2-diacyl-sn-glycerol = a triacyl-sn-glycerol + CoA. It carries out the reaction 2-(9Z-octadecenoyl)-glycerol + (9Z)-octadecenoyl-CoA = 1,2-di-(9Z-octadecenoyl)-glycerol + CoA. The catalysed reaction is 1,2-di-(9Z-octadecenoyl)-sn-glycerol + (9Z)-octadecenoyl-CoA = 1,2,3-tri-(9Z-octadecenoyl)-glycerol + CoA. Functionally, catalytic subunit of the alternative triglyceride biosynthesis pathway, which mediates formation of triacylglycerol from diacylglycerol and membrane phospholipids. Synthesizes triacylglycerol at the expense of membrane phospholipids, such as phosphatidylcholine (PC) and its ether-linked form (ePC), thereby altering the composition of membranes. The alternative triglyceride biosynthesis pathway is probably required to provide the energy required for rapid growth when fuel sources are limiting. It maintains mitochondrial function during periods of extracellular lipid starvation. Can also use acyl-CoA as donor: acts as a acyl-CoA:monoacylglycerol acyltransferase (MGAT), but also shows acyl-CoA:diacylglycerol acyltransferase (DGAT) activity. In Gallus gallus (Chicken), this protein is DGAT1/2-independent enzyme synthesizing storage lipids (TMEM68).